Reading from the N-terminus, the 921-residue chain is Probable dipeptidyl-aminopeptidase B (921 aa).

A disordered region spans residues Met1–Thr33. Residues Met1–Lys109 lie on the Cytoplasmic side of the membrane. The span at Asn8 to Glu17 shows a compositional bias: polar residues. The chain crosses the membrane as a helical; Signal-anchor for type II membrane protein span at residues Leu110–Leu130. At Gly131–Val921 the chain is on the vacuolar side. Residue Asn362 is glycosylated (N-linked (GlcNAc...) asparagine). Catalysis depends on Ser768, which acts as the Charge relay system. Asn822 carries N-linked (GlcNAc...) asparagine glycosylation. Active-site charge relay system residues include Asp845 and His878.

This sequence belongs to the peptidase S9B family.

It localises to the vacuole membrane. The enzyme catalyses Release of an N-terminal dipeptide, Xaa-Yaa-|-Zaa-, from a polypeptide, preferentially when Yaa is Pro, provided Zaa is neither Pro nor hydroxyproline.. Type IV dipeptidyl-peptidase which removes N-terminal dipeptides sequentially from polypeptides having unsubstituted N-termini provided that the penultimate residue is proline. The chain is Probable dipeptidyl-aminopeptidase B (dapB) from Sclerotinia sclerotiorum (strain ATCC 18683 / 1980 / Ss-1) (White mold).